We begin with the raw amino-acid sequence, 882 residues long: DNA mismatch repair protein MutS (882 aa).

Residue 629-636 (GPNMGGKS) participates in ATP binding.

It belongs to the DNA mismatch repair MutS family.

In terms of biological role, this protein is involved in the repair of mismatches in DNA. It is possible that it carries out the mismatch recognition step. This protein has a weak ATPase activity. This is DNA mismatch repair protein MutS from Ralstonia pickettii (strain 12J).